Here is a 287-residue protein sequence, read N- to C-terminus: Phosphoribosylaminoimidazole-succinocarboxamide synthase (287 aa).

Belongs to the SAICAR synthetase family.

It catalyses the reaction 5-amino-1-(5-phospho-D-ribosyl)imidazole-4-carboxylate + L-aspartate + ATP = (2S)-2-[5-amino-1-(5-phospho-beta-D-ribosyl)imidazole-4-carboxamido]succinate + ADP + phosphate + 2 H(+). The protein operates within purine metabolism; IMP biosynthesis via de novo pathway; 5-amino-1-(5-phospho-D-ribosyl)imidazole-4-carboxamide from 5-amino-1-(5-phospho-D-ribosyl)imidazole-4-carboxylate: step 1/2. The protein is Phosphoribosylaminoimidazole-succinocarboxamide synthase of Neisseria meningitidis serogroup B (strain ATCC BAA-335 / MC58).